A 519-amino-acid chain; its full sequence is Maturase K (519 aa).

It belongs to the intron maturase 2 family. MatK subfamily.

It is found in the plastid. The protein localises to the chloroplast. Usually encoded in the trnK tRNA gene intron. Probably assists in splicing its own and other chloroplast group II introns. This is Maturase K from Cycas panzhihuaensis (Dukou cycad).